Reading from the N-terminus, the 380-residue chain is MLEKQRSTAETFGIPLAVLLEITHRCPLQCPYCSNPVELDRSGKELTTDEWKKVLSELAEIGVLQVHFSGGEPTARKDLVELVKHASDVGLYTNLITSAVLLTRERLSELADAGLCHVQISFQGVEEGLADRVAGYRNAHRKKLEVAKWTRELDLPLTVNAVMHRQNLHQLPDIIQMSIDLDADRLEVANVQYYGWALKNRAALMPTVAQLDECTRLVEEARERLKGRLSIDYVVPDYYALRPKKCMGGWGRQFFNISPAGKVLPCHAAESITGLDFESVRSNHSIAWIWQNSEAFNRYRGTGWMKEPCKSCEFREIDFGGCRCQAFALTGDAANTDPACALSPLHETIFKQAEREAEGETNRFLYRNFAGGTLEPENDA.

In terms of domain architecture, Radical SAM core spans 12–228; that stretch reads FGIPLAVLLE…EEARERLKGR (217 aa). [4Fe-4S] cluster-binding residues include cysteine 26, cysteine 30, and cysteine 33.

This sequence belongs to the radical SAM superfamily. PqqE family. Interacts with PqqD. The interaction is necessary for activity of PqqE. It depends on [4Fe-4S] cluster as a cofactor.

The enzyme catalyses [PQQ precursor protein] + S-adenosyl-L-methionine = E-Y cross-linked-[PQQ precursor protein] + 5'-deoxyadenosine + L-methionine + H(+). It functions in the pathway cofactor biosynthesis; pyrroloquinoline quinone biosynthesis. Catalyzes the cross-linking of a glutamate residue and a tyrosine residue in the PqqA protein as part of the biosynthesis of pyrroloquinoline quinone (PQQ). This is PqqA peptide cyclase from Bradyrhizobium diazoefficiens (strain JCM 10833 / BCRC 13528 / IAM 13628 / NBRC 14792 / USDA 110).